Consider the following 396-residue polypeptide: ATP synthase subunit beta, chloroplastic (396 aa).

74–81 (GGAGVGKT) lines the ATP pocket.

Belongs to the ATPase alpha/beta chains family. As to quaternary structure, F-type ATPases have 2 components, CF(1) - the catalytic core - and CF(0) - the membrane proton channel. CF(1) has five subunits: alpha(3), beta(3), gamma(1), delta(1), epsilon(1). CF(0) has four main subunits: a(1), b(1), b'(1) and c(9-12).

The protein resides in the plastid. The protein localises to the chloroplast thylakoid membrane. It catalyses the reaction ATP + H2O + 4 H(+)(in) = ADP + phosphate + 5 H(+)(out). Its function is as follows. Produces ATP from ADP in the presence of a proton gradient across the membrane. The catalytic sites are hosted primarily by the beta subunits. This chain is ATP synthase subunit beta, chloroplastic, found in Adiantum raddianum (Maidenhair fern).